The chain runs to 752 residues: DNA topoisomerase 4 subunit A (752 aa).

The region spanning L31 to M494 is the Topo IIA-type catalytic domain. Y120 functions as the O-(5'-phospho-DNA)-tyrosine intermediate in the catalytic mechanism. The disordered stretch occupies residues Y472–H492. Over residues G473 to H492 the composition is skewed to basic and acidic residues.

It belongs to the type II topoisomerase GyrA/ParC subunit family. ParC type 1 subfamily. Heterotetramer composed of ParC and ParE.

It is found in the cell membrane. The enzyme catalyses ATP-dependent breakage, passage and rejoining of double-stranded DNA.. Topoisomerase IV is essential for chromosome segregation. It relaxes supercoiled DNA. Performs the decatenation events required during the replication of a circular DNA molecule. The sequence is that of DNA topoisomerase 4 subunit A from Salmonella typhimurium (strain LT2 / SGSC1412 / ATCC 700720).